Consider the following 239-residue polypeptide: O-antigen export system ATP-binding protein RfbE (239 aa).

The 212-residue stretch at 28-239 folds into the ABC transporter domain; sequence VRVSTGGRIG…LIYEESMDIL (212 aa). ATP is bound at residue 66-73; that stretch reads GHNGAGKS.

This sequence belongs to the ABC transporter superfamily.

It is found in the cell inner membrane. In terms of biological role, may form an ATP-driven O-antigen export apparatus, in association with RfbD. This is O-antigen export system ATP-binding protein RfbE (rfbE) from Yersinia enterocolitica.